We begin with the raw amino-acid sequence, 321 residues long: tRNA-dihydrouridine synthase B (321 aa).

Residues 16-18 (PMA) and Gln-70 contribute to the FMN site. Residue Cys-100 is the Proton donor of the active site. FMN contacts are provided by residues Lys-139, 200–202 (NGD), and 224–225 (GR).

Belongs to the Dus family. DusB subfamily. FMN is required as a cofactor.

The catalysed reaction is a 5,6-dihydrouridine in tRNA + NAD(+) = a uridine in tRNA + NADH + H(+). The enzyme catalyses a 5,6-dihydrouridine in tRNA + NADP(+) = a uridine in tRNA + NADPH + H(+). Functionally, catalyzes the synthesis of 5,6-dihydrouridine (D), a modified base found in the D-loop of most tRNAs, via the reduction of the C5-C6 double bond in target uridines. In Pectobacterium carotovorum (Erwinia carotovora), this protein is tRNA-dihydrouridine synthase B.